Consider the following 463-residue polypeptide: Mitochondrial dynamics protein MID49 (463 aa).

Residues 1-24 are Mitochondrial intermembrane-facing; the sequence is MAELQIRKKEKKSGDGIGTMVDFL. The chain crosses the membrane as a helical span at residues 25–47; the sequence is LANARLVLGVGGAAMLGIATLAV. Residues 48-463 are Cytoplasmic-facing; sequence KRLIDRATSP…EPDDVLKRER (416 aa). A disordered region spans residues 87 to 119; it reads TLRRKEDLEHHCAPLSLPDPSQKMPEATGTSQV. Residues 89–98 show a composition bias toward basic and acidic residues; sequence RRKEDLEHHC.

Belongs to the MID49/MID51 family.

Its subcellular location is the mitochondrion outer membrane. Functionally, mitochondrial outer membrane protein which regulates mitochondrial organization. It is required for mitochondrial fission and promotes the recruitment and association of the fission mediator dynamin-related protein 1 (DNM1L) to the mitochondrial surface independently of the mitochondrial fission FIS1 and MFF proteins. Regulates DNM1L GTPase activity. In Xenopus laevis (African clawed frog), this protein is Mitochondrial dynamics protein MID49 (mief2).